A 1557-amino-acid polypeptide reads, in one-letter code: DVA-1 polyprotein (1557 aa).

The first 21 residues, 1–21 (MKSTSFITLLLLSYFIVEAHS), serve as a signal peptide directing secretion. Positions 22–60 (SIFHWDDERLFKHDDTHSWLTDVQKAELETLKHQPIQLR) are excised as a propeptide. N-linked (GlcNAc...) asparagine glycosylation occurs at Asn997.

It belongs to the NPA family. Post-translationally, nematode polyprotein allergens (NPAs) are synthesized as large polypeptides that are subsequently proteolytically cleaved to active polypeptide units.

In terms of biological role, has high binding affinity for fatty acids and retinoids. The polypeptide is DVA-1 polyprotein (DVA-1) (Dictyocaulus viviparus (Bovine lungworm)).